The primary structure comprises 266 residues: MSSIDTPANKLQAKTLFHPEHLEYINKQLSELSPQDILKWCRWTLPSLFQTSALGLSGLVIMDMLSKMDMNVPLIFINTLHHFPETLDLLEKVKTKYPNVPVHVYRCAEAANEKEFAQKFGEKLWETDESRYDFLVKVEPASRAYSDLNVLAVFTGRRRSQGGERGSLPIVQLDGPVLKINPLANWSFTEVHNYIITNNVPYNELLNKGYRSVGDWHSTQPVREGEDERAGRWRGREKTECGLHSHPQSKFAQYMAELKKKETADQ.

Positions 219-246 are disordered; sequence TQPVREGEDERAGRWRGREKTECGLHSH. The span at 223–243 shows a compositional bias: basic and acidic residues; sequence REGEDERAGRWRGREKTECGL.

The protein belongs to the PAPS reductase family. CysH subfamily.

Its subcellular location is the cytoplasm. It is found in the nucleus. The enzyme catalyses [thioredoxin]-disulfide + sulfite + adenosine 3',5'-bisphosphate + 2 H(+) = [thioredoxin]-dithiol + 3'-phosphoadenylyl sulfate. Its pathway is sulfur metabolism; hydrogen sulfide biosynthesis; sulfite from sulfate: step 3/3. In terms of biological role, the NADP dependent reduction of PAPS into sulfite involves thioredoxin which probably plays the role of a thiol carrier. Required for methionine synthesis. The sequence is that of Probable phosphoadenosine phosphosulfate reductase (met16) from Schizosaccharomyces pombe (strain 972 / ATCC 24843) (Fission yeast).